The primary structure comprises 553 residues: Protein PNS1 (553 aa).

The segment covering 1–17 (MYGKSGPPPEGYVPQHP) has biased composition (pro residues). Residues 1–49 (MYGKSGPPPEGYVPQHPPAQGYAPHNPPPGYVHENPFQEPVPQGQEYSP) form a disordered region. At 1-95 (MYGKSGPPPE…AGNRLKFNDW (95 aa)) the chain is on the cytoplasmic side. A helical transmembrane segment spans residues 96 to 116 (PFTIIFLLTVGAFIAVAVLTL). The Extracellular segment spans residues 117–143 (RGWSLSPTSNGSGIYDGDNTHTLNTNA). Asn126 carries N-linked (GlcNAc...) asparagine glycosylation. A helical membrane pass occupies residues 144–164 (AILLLISCGVAVALSVFGLVL). Residues 165–170 (AGMYTK) lie on the Cytoplasmic side of the membrane. Residues 171–191 (FFIYAAMILNTVVGLGTAITY) traverse the membrane as a helical segment. Residues 192-196 (LVLRH) are Extracellular-facing. Residues 197–217 (WSAGIVFMIFTILTAVCYWLM) form a helical membrane-spanning segment. The Cytoplasmic segment spans residues 218–243 (RSRIPFSVAVLRTVMSVMKKHPQTWL). A helical membrane pass occupies residues 244–264 (VSLLGTIVSAAFSVIFSVVLV). The Extracellular portion of the chain corresponds to 265-288 (ATYIKYDPKSENGGCDVSGGSCSR). Residues 289 to 309 (GKLIGILVLVFFCGFYISEVI) form a helical membrane-spanning segment. Residues 310 to 346 (RNVIHCTIAGIYGCWYYFSKSDQGMPRWPAFGSLKRA) lie on the Cytoplasmic side of the membrane. The helical transmembrane segment at 347–367 (LTTSFGSICFGSLIVSLIQLL) threads the bilayer. The Extracellular segment spans residues 368–385 (RQIIQLLRNGIISGISDS). The helical transmembrane segment at 386–406 (GWMQCLWLILDAVVGVFEWMA) threads the bilayer. Residues 407–450 (EYFNHYAYCFIALYGKPYLRAAKETWHMLREKGIDALINDNLIN) lie on the Cytoplasmic side of the membrane. A helical transmembrane segment spans residues 451–471 (LALGFYTLFVGYTTALFSYLF). At 472 to 483 (LRFTKPDYNSGG) the chain is on the extracellular side. Residues 484–504 (GFNAVLMAFSFLIAIQLTHVA) traverse the membrane as a helical segment. Topologically, residues 505-553 (TETIRSGTATFFVALGNDPEIFRVSYPQRFDEIFRAYPDVLNKLSHQHV) are cytoplasmic.

Belongs to the CTL (choline transporter-like) family.

It localises to the cell membrane. In terms of biological role, probably involved in transport through the plasma membrane. The polypeptide is Protein PNS1 (PNS1) (Eremothecium gossypii (strain ATCC 10895 / CBS 109.51 / FGSC 9923 / NRRL Y-1056) (Yeast)).